The primary structure comprises 564 residues: Aspyridones efflux protein (564 aa).

Positions 1–17 (MHPDQADTAAMQQQTTT) are enriched in low complexity. A disordered region spans residues 1–49 (MHPDQADTAAMQQQTTTECSDRSRPEKAEEGHAREHTVTRTCSREPEQT). Positions 19 to 47 (CSDRSRPEKAEEGHAREHTVTRTCSREPE) are enriched in basic and acidic residues. 10 helical membrane-spanning segments follow: residues 66-86 (AICL…TAIP), 127-147 (WTFL…ATAP), 158-178 (IAGC…THSV), 185-205 (LFMA…PPLG), 216-236 (WCFW…VFLF), 260-280 (VGTL…QWGG), 287-307 (SGIV…FGIV), 335-355 (FALG…FQGV), 368-388 (LPML…VTII), and 392-412 (APFM…LLLF). Asn-415 carries an N-linked (GlcNAc...) asparagine glycan. The next 2 helical transmembrane spans lie at 416–436 (VTAA…GFGW) and 454–474 (IATA…VSVA). N-linked (GlcNAc...) asparagine glycosylation is present at Asn-524. A helical transmembrane segment spans residues 528–548 (LSAFFVATIMAIMSLVGCTFV).

This sequence belongs to the major facilitator superfamily. TCR/Tet family.

It localises to the cell membrane. Efflux pump that may be involved in the secretion of leporins. This Neocamarosporium betae (Beet black rot fungus) protein is Aspyridones efflux protein (TP).